The primary structure comprises 226 residues: ATP-dependent dethiobiotin synthetase BioD (226 aa).

14 to 19 is a binding site for ATP; it reads GIGKTF. Mg(2+) is bound at residue Thr18. Residue Lys39 is part of the active site. A substrate-binding site is contributed by Ser43. Residues Asp56, 117 to 120, 177 to 178, 206 to 208, and Asn213 each bind ATP; these read EGVG, NT, and PHI. 2 residues coordinate Mg(2+): Asp56 and Glu117.

It belongs to the dethiobiotin synthetase family. In terms of assembly, homodimer. The cofactor is Mg(2+).

The protein localises to the cytoplasm. It catalyses the reaction (7R,8S)-7,8-diammoniononanoate + CO2 + ATP = (4R,5S)-dethiobiotin + ADP + phosphate + 3 H(+). It participates in cofactor biosynthesis; biotin biosynthesis; biotin from 7,8-diaminononanoate: step 1/2. Its function is as follows. Catalyzes a mechanistically unusual reaction, the ATP-dependent insertion of CO2 between the N7 and N8 nitrogen atoms of 7,8-diaminopelargonic acid (DAPA, also called 7,8-diammoniononanoate) to form a ureido ring. The sequence is that of ATP-dependent dethiobiotin synthetase BioD from Xylella fastidiosa (strain M12).